A 278-amino-acid chain; its full sequence is Putative pyruvate, phosphate dikinase regulatory protein (278 aa).

Residue 156-163 (GVSRTSKT) coordinates ADP.

This sequence belongs to the pyruvate, phosphate/water dikinase regulatory protein family. PDRP subfamily.

It catalyses the reaction N(tele)-phospho-L-histidyl/L-threonyl-[pyruvate, phosphate dikinase] + ADP = N(tele)-phospho-L-histidyl/O-phospho-L-threonyl-[pyruvate, phosphate dikinase] + AMP + H(+). It carries out the reaction N(tele)-phospho-L-histidyl/O-phospho-L-threonyl-[pyruvate, phosphate dikinase] + phosphate + H(+) = N(tele)-phospho-L-histidyl/L-threonyl-[pyruvate, phosphate dikinase] + diphosphate. Functionally, bifunctional serine/threonine kinase and phosphorylase involved in the regulation of the pyruvate, phosphate dikinase (PPDK) by catalyzing its phosphorylation/dephosphorylation. This chain is Putative pyruvate, phosphate dikinase regulatory protein, found in Lactobacillus acidophilus (strain ATCC 700396 / NCK56 / N2 / NCFM).